The following is a 208-amino-acid chain: Thymidylate kinase (208 aa).

9–16 lines the ATP pocket; that stretch reads GGEGCGKS.

Belongs to the thymidylate kinase family.

The enzyme catalyses dTMP + ATP = dTDP + ADP. In terms of biological role, phosphorylation of dTMP to form dTDP in both de novo and salvage pathways of dTTP synthesis. The protein is Thymidylate kinase of Dehalococcoides mccartyi (strain CBDB1).